Consider the following 218-residue polypeptide: Probable nicotinate-nucleotide adenylyltransferase (218 aa).

This sequence belongs to the NadD family.

The enzyme catalyses nicotinate beta-D-ribonucleotide + ATP + H(+) = deamido-NAD(+) + diphosphate. The protein operates within cofactor biosynthesis; NAD(+) biosynthesis; deamido-NAD(+) from nicotinate D-ribonucleotide: step 1/1. Functionally, catalyzes the reversible adenylation of nicotinate mononucleotide (NaMN) to nicotinic acid adenine dinucleotide (NaAD). In Corynebacterium glutamicum (strain ATCC 13032 / DSM 20300 / JCM 1318 / BCRC 11384 / CCUG 27702 / LMG 3730 / NBRC 12168 / NCIMB 10025 / NRRL B-2784 / 534), this protein is Probable nicotinate-nucleotide adenylyltransferase.